The chain runs to 189 residues: uncharacterized protein (189 aa).

The next 3 helical transmembrane spans lie at 2–22 (LVVV…HHLL), 93–113 (ILFY…YFIL), and 116–136 (FYST…LHTL).

The protein resides in the membrane. This is an uncharacterized protein from Schizosaccharomyces pombe (strain 972 / ATCC 24843) (Fission yeast).